The primary structure comprises 958 residues: Collagen alpha-1(I) chain (958 aa).

Residues 1-958 (GPMGPSGPRG…PGPPGPPGPP (958 aa)) are disordered. Positions 50–64 (NGDDGEAGKPGRPGE) are enriched in basic and acidic residues. At Ser92 the chain carries Phosphoserine. Composition is skewed to low complexity over residues 100-116 (DAGP…PGEN) and 139-152 (PAGA…TGAA). The segment covering 154 to 166 (PPGPTGPAGPPGF) has biased composition (pro residues). Low complexity predominate over residues 216 to 232 (APGIAGAPGFPGARGPS). A compositionally biased stretch (gly residues) spans 294-303 (GERGGPGSRG). Composition is skewed to low complexity over residues 304–335 (FPGS…PGEA), 347–373 (KGIT…QDGR), 382–401 (ARGQ…AGEP), 557–571 (SGPS…ARGA), 584–614 (AGFA…AGPA), 640–656 (SAGP…AGRV), 685–694 (ETGPAGRPGE), and 704–728 (AGEK…QGIA). Ser560 is modified (phosphoserine). Pro residues-rich tracts occupy residues 769 to 779 (PPGPVGPPGIA) and 808 to 823 (AGPP…PGPV). Over residues 859 to 873 (RGDKGETGEQGDRGI) the composition is skewed to basic and acidic residues. The span at 892 to 925 (PGEQGPSGASGPAGPRGPPGSAGAPGKDGINGIP) shows a compositional bias: low complexity. Pro residues predominate over residues 943 to 958 (VGPPGPPGPPGPPGPP).

This sequence belongs to the fibrillar collagen family. As to quaternary structure, trimers of one alpha 2(I) and two alpha 1(I) chains. Prolines at the third position of the tripeptide repeating unit (G-X-Y) are hydroxylated in some or all of the chains. Forms the fibrils of tendon, ligaments and bones. In bones, the fibrils are mineralized with calcium hydroxyapatite.

It localises to the secreted. The protein localises to the extracellular space. Its subcellular location is the extracellular matrix. Type I collagen is a member of group I collagen (fibrillar forming collagen). This is Collagen alpha-1(I) chain from Macrauchenia sp.